Here is a 440-residue protein sequence, read N- to C-terminus: Heat stress transcription factor A-4b (440 aa).

Positions 121-181 (NERKDYEEEI…QRSLISYVRE (61 aa)) form a coiled coil. The hydrophobic repeat HR-A/B stretch occupies residues 133 to 183 (LKSDNAALSSELQNNTLKKLNMEKRMQALEEKLFVVEDQQRSLISYVREIV). The Nuclear export signal motif lies at 158 to 163 (MQALEE). The Nuclear localization signal signature appears at 200–204 (RKKRR). The segment at 264 to 417 (DISYDDGVPG…EMKSGDRQHL (154 aa)) is disordered. The span at 295 to 305 (SPPTRMRTSSA) shows a compositional bias: polar residues. Over residues 333-343 (SRVDTRAKVSE) the composition is skewed to basic and acidic residues. An AHA motif is present at residues 375 to 384 (DGFWQQFLTE). The segment covering 380-390 (QFLTEQPGSSD) has biased composition (polar residues). The span at 391–417 (AHQEAQSERRDGGNKVDEMKSGDRQHL) shows a compositional bias: basic and acidic residues.

This sequence belongs to the HSF family. Class A subfamily. As to quaternary structure, homotrimer. Exhibits temperature-dependent phosphorylation.

It localises to the cytoplasm. Its subcellular location is the nucleus. Its function is as follows. Transcriptional regulator that specifically binds DNA of heat shock promoter elements (HSE). This Oryza sativa subsp. japonica (Rice) protein is Heat stress transcription factor A-4b (HSFA4B).